A 554-amino-acid polypeptide reads, in one-letter code: Dihydroxy-acid dehydratase (554 aa).

Cys-48 is a [2Fe-2S] cluster binding site. Asp-80 is a binding site for Mg(2+). Residue Cys-121 coordinates [2Fe-2S] cluster. Mg(2+)-binding residues include Asp-122 and Lys-123. At Lys-123 the chain carries N6-carboxylysine. Cys-193 contacts [2Fe-2S] cluster. Glu-444 provides a ligand contact to Mg(2+). The Proton acceptor role is filled by Ser-470.

Belongs to the IlvD/Edd family. In terms of assembly, homodimer. Requires [2Fe-2S] cluster as cofactor. The cofactor is Mg(2+).

The catalysed reaction is (2R)-2,3-dihydroxy-3-methylbutanoate = 3-methyl-2-oxobutanoate + H2O. The enzyme catalyses (2R,3R)-2,3-dihydroxy-3-methylpentanoate = (S)-3-methyl-2-oxopentanoate + H2O. The protein operates within amino-acid biosynthesis; L-isoleucine biosynthesis; L-isoleucine from 2-oxobutanoate: step 3/4. It participates in amino-acid biosynthesis; L-valine biosynthesis; L-valine from pyruvate: step 3/4. In terms of biological role, functions in the biosynthesis of branched-chain amino acids. Catalyzes the dehydration of (2R,3R)-2,3-dihydroxy-3-methylpentanoate (2,3-dihydroxy-3-methylvalerate) into 2-oxo-3-methylpentanoate (2-oxo-3-methylvalerate) and of (2R)-2,3-dihydroxy-3-methylbutanoate (2,3-dihydroxyisovalerate) into 2-oxo-3-methylbutanoate (2-oxoisovalerate), the penultimate precursor to L-isoleucine and L-valine, respectively. This Tremblaya princeps protein is Dihydroxy-acid dehydratase.